We begin with the raw amino-acid sequence, 1199 residues long: DNA-directed RNA polymerase subunit beta' (1199 aa).

Residues Cys60, Cys62, Cys75, and Cys78 each contribute to the Zn(2+) site. Asp449, Asp451, and Asp453 together coordinate Mg(2+). Residues Cys818, Cys892, Cys899, and Cys902 each coordinate Zn(2+).

Belongs to the RNA polymerase beta' chain family. In terms of assembly, the RNAP catalytic core consists of 2 alpha, 1 beta, 1 beta' and 1 omega subunit. When a sigma factor is associated with the core the holoenzyme is formed, which can initiate transcription. Mg(2+) is required as a cofactor. Requires Zn(2+) as cofactor.

The enzyme catalyses RNA(n) + a ribonucleoside 5'-triphosphate = RNA(n+1) + diphosphate. Functionally, DNA-dependent RNA polymerase catalyzes the transcription of DNA into RNA using the four ribonucleoside triphosphates as substrates. This Bacillus licheniformis (strain ATCC 14580 / DSM 13 / JCM 2505 / CCUG 7422 / NBRC 12200 / NCIMB 9375 / NCTC 10341 / NRRL NRS-1264 / Gibson 46) protein is DNA-directed RNA polymerase subunit beta'.